The chain runs to 419 residues: Napsin-A (419 aa).

The N-terminal stretch at 1 to 16 is a signal peptide; the sequence is MSPLLLLLLCLLLGNL. The Peptidase A1 domain maps to 73-394; the sequence is YFGTIGLGTP…KNVGPRVGLA (322 aa). The N-linked (GlcNAc...) asparagine glycan is linked to Asn-85. Residue Asp-91 is part of the active site. A disulfide bridge links Cys-104 with Cys-111. N-linked (GlcNAc...) asparagine glycosylation is found at Asn-128 and Asn-149. Residues Cys-269 and Cys-273 are joined by a disulfide bond. Asp-278 is a catalytic residue. A disulfide bond links Cys-312 and Cys-349. A glycan (N-linked (GlcNAc...) asparagine) is linked at Asn-331. The disordered stretch occupies residues 391-419; it reads VGLARAQSRSTDRAERRTTQAQFFKRRPG.

Belongs to the peptidase A1 family. As to expression, expressed at the highest levels in the kidney, at a moderate level in the lung, and at low levels in the spleen and adipose tissue.

It is found in the secreted. Its function is as follows. May be involved in processing of pneumocyte surfactant precursors. In Mus musculus (Mouse), this protein is Napsin-A (Napsa).